A 269-amino-acid chain; its full sequence is Phosphate import ATP-binding protein PstB 1 (269 aa).

Residues 25-264 (LSTEDLHVFY…PQVDLTNDYI (240 aa)) enclose the ABC transporter domain. Residue 57-64 (GPSGSGKS) participates in ATP binding.

This sequence belongs to the ABC transporter superfamily. Phosphate importer (TC 3.A.1.7) family. The complex is composed of two ATP-binding proteins (PstB), two transmembrane proteins (PstC and PstA) and a solute-binding protein (PstS).

It is found in the cell membrane. It carries out the reaction phosphate(out) + ATP + H2O = ADP + 2 phosphate(in) + H(+). Its function is as follows. Part of the ABC transporter complex PstSACB involved in phosphate import. Responsible for energy coupling to the transport system. This chain is Phosphate import ATP-binding protein PstB 1, found in Lactiplantibacillus plantarum (strain ATCC BAA-793 / NCIMB 8826 / WCFS1) (Lactobacillus plantarum).